The following is a 276-amino-acid chain: NAD-capped RNA hydrolase NudC (276 aa).

Arg-82 contributes to the substrate binding site. Zn(2+)-binding residues include Cys-112 and Cys-115. Glu-125 serves as a coordination point for substrate. Residues Cys-130 and Cys-133 each contribute to the Zn(2+) site. Tyr-138 is a substrate binding site. One can recognise a Nudix hydrolase domain in the interval Pro-139 to Tyr-262. A divalent metal cation contacts are provided by Ala-172, Glu-188, and Glu-192. The short motif at Gly-173–Ala-194 is the Nudix box element. Position 206–213 (Gln-206–Ser-213) interacts with substrate. Glu-233 contributes to the a divalent metal cation binding site. A substrate-binding site is contributed by Ala-255.

Belongs to the Nudix hydrolase family. NudC subfamily. Homodimer. It depends on Mg(2+) as a cofactor. The cofactor is Mn(2+). Zn(2+) is required as a cofactor.

The catalysed reaction is a 5'-end NAD(+)-phospho-ribonucleoside in mRNA + H2O = a 5'-end phospho-adenosine-phospho-ribonucleoside in mRNA + beta-nicotinamide D-ribonucleotide + 2 H(+). It carries out the reaction NAD(+) + H2O = beta-nicotinamide D-ribonucleotide + AMP + 2 H(+). The enzyme catalyses NADH + H2O = reduced beta-nicotinamide D-ribonucleotide + AMP + 2 H(+). Its function is as follows. mRNA decapping enzyme that specifically removes the nicotinamide adenine dinucleotide (NAD) cap from a subset of mRNAs by hydrolyzing the diphosphate linkage to produce nicotinamide mononucleotide (NMN) and 5' monophosphate mRNA. The NAD-cap is present at the 5'-end of some mRNAs and stabilizes RNA against 5'-processing. Has preference for mRNAs with a 5'-end purine. Catalyzes the hydrolysis of a broad range of dinucleotide pyrophosphates. This chain is NAD-capped RNA hydrolase NudC, found in Pseudomonas putida (strain ATCC 47054 / DSM 6125 / CFBP 8728 / NCIMB 11950 / KT2440).